We begin with the raw amino-acid sequence, 459 residues long: DNA polymerase subunit gamma-2 (459 aa).

As to quaternary structure, heterotrimer composed of a catalytic subunit and a homodimer of accessory subunits (POLG:POLG2).

The protein localises to the mitochondrion. The protein resides in the mitochondrion matrix. Its subcellular location is the mitochondrion nucleoid. Its function is as follows. Accessory subunit of DNA polymerase gamma solely responsible for replication of mitochondrial DNA (mtDNA). Acts as an allosteric regulator of the holoenzyme activities. Enhances the polymerase activity and the processivity of POLG by increasing its interactions with the DNA template. Suppresses POLG exonucleolytic proofreading especially toward homopolymeric templates bearing mismatched termini. Binds to single-stranded DNA. This Mus musculus (Mouse) protein is DNA polymerase subunit gamma-2 (Polg2).